The primary structure comprises 108 residues: Protein Asterix (108 aa).

A disordered region spans residues 1–29; it reads MNMTVDPRRKEKINRYKAPKNQGQSGGAN. A helical membrane pass occupies residues 80–96; it reads VLSSFMLSVSAVVMSYL.

Belongs to the Asterix family.

It localises to the membrane. In Drosophila melanogaster (Fruit fly), this protein is Protein Asterix.